Here is a 33-residue protein sequence, read N- to C-terminus: Protamine-2C (33 aa).

The segment at methionine 1 to arginine 33 is disordered.

As to expression, testis.

It is found in the nucleus. Its subcellular location is the chromosome. In terms of biological role, protamines substitute for histones in the chromatin of sperm during the haploid phase of spermatogenesis. They compact sperm DNA into a highly condensed, stable and inactive complex. The sequence is that of Protamine-2C from Oncorhynchus mykiss (Rainbow trout).